Consider the following 1017-residue polypeptide: Type VI secretion system spike protein VgrG3 (1017 aa).

Residue D842 is part of the active site.

The protein belongs to the VgrG protein family. Interacts with TsiV3. Interacts with TseL.

Its subcellular location is the secreted. Functionally, part of the type VI secretion system specialized secretion system, which delivers several virulence factors in both prokaryotic and eukaryotic cells during infection. Forms the spike at the tip of the elongating tube formed by haemolysin co-regulated protein Hcp. Allows the delivery of the TseL antibacterial toxin to target cells where it exerts its toxicity. Additionally, acts directly as an effector and targets the cell wall peptidoglycan layer of prey cells for degradation via its C-terminus. Toxicity is counteracted by a cognate immunity protein TsiV3. The chain is Type VI secretion system spike protein VgrG3 from Vibrio cholerae serotype O1 (strain ATCC 39315 / El Tor Inaba N16961).